We begin with the raw amino-acid sequence, 234 residues long: Small ribosomal subunit protein uS3 (234 aa).

Residues 39 to 107 (VRDYLKKKLS…PVHVNIEEVR (69 aa)) enclose the KH type-2 domain. The interval 212 to 234 (EQPAAAEQEKRGKKSGVKHAAAS) is disordered.

The protein belongs to the universal ribosomal protein uS3 family. Part of the 30S ribosomal subunit. Forms a tight complex with proteins S10 and S14.

Its function is as follows. Binds the lower part of the 30S subunit head. Binds mRNA in the 70S ribosome, positioning it for translation. The sequence is that of Small ribosomal subunit protein uS3 from Thiobacillus denitrificans (strain ATCC 25259 / T1).